The sequence spans 346 residues: Coproporphyrin III ferrochelatase (346 aa).

Residues serine 52 and tyrosine 121 each contribute to the Fe-coproporphyrin III site. Fe(2+) is bound by residues histidine 181 and glutamate 264.

It belongs to the ferrochelatase family.

The protein localises to the cytoplasm. The catalysed reaction is Fe-coproporphyrin III + 2 H(+) = coproporphyrin III + Fe(2+). It participates in porphyrin-containing compound metabolism; protoheme biosynthesis. Involved in coproporphyrin-dependent heme b biosynthesis. Catalyzes the insertion of ferrous iron into coproporphyrin III to form Fe-coproporphyrin III. In Mycobacterium sp. (strain JLS), this protein is Coproporphyrin III ferrochelatase.